We begin with the raw amino-acid sequence, 637 residues long: MAAMAVGGAGGSRVSSGRDLNCVPEIADTLGAVAKQGFDFLCMPVFHPRFKRESIQEPAKNRPGPQTRSDLLLSGRDWNTLIVGKLSPWIRPDSKVEKIRRNSEAAMLQELNFGAYLGLPAFLLPLNQEDNTNLARVLTNHIHTGHHSSMFWMRVPLVAPEDLRDDIIENAPTTHTEEYSGEEKTWMWWHNFRTLCDYSKRIAVALEIGADLPSNHVIDRWLGEPIKAAILPTSIFLTNKKGFPVLSKMHQRLIFRLLKLEVQFIITGTNHHSEKEFCSYLQYLEYLSQNRPPPNAYELFAKGYEDYLQSPLQPLMDNLESQTYEVFEKDPIKYSQYQQAIYKCLLGRVPEEEKDTNVQVLMVLGAGRGPLVNASLRAAKQADRRIKLYAVEKNPNAVVTLENWQFEEWGSQVTVVSSDMREWVAPEKADIIVSELLGSFADNELSPECLDGAQHFLKDDGVSIPGEYTSFLAPISSSKLYNEVRACREKDRDPEAQFEMPYVVRLHNFHQLSAPQPCFTFSHPNRDPMIDNNRYCTLEFPVEVNTVLHGFAGYFETVLYQDITLSIRPETHSPGMFSWFPILFPIKQPITVREGQTICVRFWRCSNSKKVWYEWAVTAPVCSAIHNPTGRSYTIGL.

Residue Ala-2 is modified to N-acetylalanine. The interval 13–292 is TIM barrel; it reads RVSSGRDLNC…YLEYLSQNRP (280 aa). One can recognise an SAM-dependent MTase PRMT-type domain in the interval 308–615; it reads LQSPLQPLMD…SNSKKVWYEW (308 aa). Tyr-324 contributes to the S-adenosyl-L-methionine binding site. Phe-327 serves as a coordination point for a protein. S-adenosyl-L-methionine-binding positions include 333–334, Glu-392, and 419–420; these read KY and DM. A protein-binding residues include Glu-435 and Glu-444. Catalysis depends on proton donor/acceptor residues Glu-435 and Glu-444. A beta barrel region spans residues 465–637; that stretch reads PGEYTSFLAP…PTGRSYTIGL (173 aa). Residues 488 to 494 are dimerization; that stretch reads REKDRDP.

It belongs to the class I-like SAM-binding methyltransferase superfamily. Protein arginine N-methyltransferase family. Forms, at least, homodimers and homotetramers. Component of the methylosome complex, composed of PRMT5, WDR77 and CLNS1A. Found in a complex composed of PRMT5, WDR77 and RIOK1. RIOK1 and CLNS1A associate with PRMT5 in a mutually exclusive fashion, which allows the recruitment of distinct methylation substrates, such as nucleolin/NCL and Sm proteins, respectively. Interacts with PRDM1. Identified in a complex composed of methylosome and PRMT1 and ERH. Interacts with EGFR; methylates EGFR and stimulates EGFR-mediated ERK activation. Interacts with HOXA9. Interacts with SRGAP2. Found in a complex with COPRS, RUNX1 and CBFB. Interacts with CHTOP; the interaction symmetrically methylates CHTOP, but seems to require the presence of PRMT1. Interacts with EPB41L3; this modulates methylation of target proteins. Component of a high molecular weight E2F-pocket protein complex, CERC (cyclin E1 repressor complex). Associates with SWI/SNF remodeling complexes containing SMARCA2 and SMARCA4. Interacts with JAK2, SSTR1, SUPT5H, BRAF and with active RAF1. Interacts with LSM11, PRMT7 and SNRPD3. Interacts with COPRS; promoting its recruitment on histone H4. Interacts with CLNS1A/pICln. Identified in a complex with CLNS1A/pICln and Sm proteins. Interacts with RPS10. Interacts with WDR77. Interacts with IWS1. Interacts with CRY1. Interacts with POLR2A. Interacts with SMN1/SMN2. Interacts with LYAR; this interaction is direct. Interacts with TTC5/STRAP; this interaction is DNA damage-dependent and promotes PRMT5 interaction with p53/TP53. Interacts with p53/TP53 in response to DNA damage; the interaction is TTC5/STRAP dependent. Interacts with FAM47E; the interaction is direct, promotes PRMT5 localization to chromatin, and does not disrupt its association with WDR77 or STUB1. Interacts with TDRD6. Interacts with STUB1. Interacts with MBD2. Does not interact with MBD3.

The protein resides in the cytoplasm. The protein localises to the nucleus. It localises to the golgi apparatus. It catalyses the reaction L-arginyl-[protein] + 2 S-adenosyl-L-methionine = N(omega),N(omega)'-dimethyl-L-arginyl-[protein] + 2 S-adenosyl-L-homocysteine + 2 H(+). With respect to regulation, activity is increased by EGF, HGF, FGF1 or FGF2 treatments, and slightly decreased by NGF treatment. In terms of biological role, arginine methyltransferase that can both catalyze the formation of omega-N monomethylarginine (MMA) and symmetrical dimethylarginine (sDMA), with a preference for the formation of MMA. Specifically mediates the symmetrical dimethylation of arginine residues in the small nuclear ribonucleoproteins Sm D1 (SNRPD1) and Sm D3 (SNRPD3); such methylation being required for the assembly and biogenesis of snRNP core particles. Methylates SUPT5H and may regulate its transcriptional elongation properties. May methylate the N-terminal region of MBD2. Mono- and dimethylates arginine residues of myelin basic protein (MBP) in vitro. May play a role in cytokine-activated transduction pathways. Negatively regulates cyclin E1 promoter activity and cellular proliferation. Methylates histone H2A and H4 'Arg-3' during germ cell development. Methylates histone H3 'Arg-8', which may repress transcription. Methylates the Piwi proteins (PIWIL1, PIWIL2 and PIWIL4), methylation of Piwi proteins being required for the interaction with Tudor domain-containing proteins and subsequent localization to the meiotic nuage. Methylates RPS10. Attenuates EGF signaling through the MAPK1/MAPK3 pathway acting at 2 levels. First, monomethylates EGFR; this enhances EGFR 'Tyr-1197' phosphorylation and PTPN6 recruitment, eventually leading to reduced SOS1 phosphorylation. Second, methylates RAF1 and probably BRAF, hence destabilizing these 2 signaling proteins and reducing their catalytic activity. Required for induction of E-selectin and VCAM-1, on the endothelial cells surface at sites of inflammation. Methylates HOXA9. Methylates and regulates SRGAP2 which is involved in cell migration and differentiation. Acts as a transcriptional corepressor in CRY1-mediated repression of the core circadian component PER1 by regulating the H4R3 dimethylation at the PER1 promoter. Methylates GM130/GOLGA2, regulating Golgi ribbon formation. Methylates H4R3 in genes involved in glioblastomagenesis in a CHTOP- and/or TET1-dependent manner. Symmetrically methylates POLR2A, a modification that allows the recruitment to POLR2A of proteins including SMN1/SMN2 and SETX. This is required for resolving RNA-DNA hybrids created by RNA polymerase II, that form R-loop in transcription terminal regions, an important step in proper transcription termination. Along with LYAR, binds the promoter of gamma-globin HBG1/HBG2 and represses its expression. Symmetrically methylates NCL. Methylates p53/TP53; methylation might possibly affect p53/TP53 target gene specificity. Involved in spliceosome maturation and mRNA splicing in prophase I spermatocytes through the catalysis of the symmetrical arginine dimethylation of SNRPB (small nuclear ribonucleoprotein-associated protein) and the interaction with tudor domain-containing protein TDRD6. The sequence is that of Protein arginine N-methyltransferase 5 (PRMT5) from Macaca fascicularis (Crab-eating macaque).